Here is an 827-residue protein sequence, read N- to C-terminus: SH3-containing GRB2-like protein 3-interacting protein 1 (827 aa).

Disordered stretches follow at residues 1 to 116 (MMEG…SHKK), 143 to 199 (IGNI…ALAP), and 223 to 278 (IWGS…QAAT). Basic and acidic residues-rich tracts occupy residues 16 to 32 (RKKE…DRDG) and 40 to 53 (LPYH…REGG). Phosphoserine is present on residues Ser78, Ser104, Ser105, Ser107, Ser149, Ser151, Ser156, and Ser169. Phosphothreonine occurs at positions 180 and 182. Ser236 is subject to Phosphoserine. Pro residues predominate over residues 245-260 (TGTPPPLPPKTVPATP). Phosphothreonine occurs at positions 247 and 259. A phosphoserine mark is found at Ser265, Ser287, Ser289, Ser300, Ser316, and Ser319. The segment covering 265–276 (SPLTVATGNDQA) has biased composition (polar residues). The disordered stretch occupies residues 315-505 (FSDASPEHVT…IAPLARAEST (191 aa)). A compositionally biased stretch (basic and acidic residues) spans 319–333 (SPEHVTPELTPREKV). A phosphothreonine mark is found at Thr324, Thr328, and Thr335. Low complexity predominate over residues 335-345 (TPPAASDIPAD). Over residues 346 to 369 (SPTPGPPGPPGSAGPPGPPGPRNV) the composition is skewed to pro residues. Ser371 carries the post-translational modification Phosphoserine. A compositionally biased stretch (basic and acidic residues) spans 377-392 (EVQKKVAEQTFIKDDY). Phosphoserine is present on Ser398. Phosphothreonine is present on Thr409. The span at 436-455 (ASGASSPARPATPLVPCSCS) shows a compositional bias: low complexity. Residues 456–474 (TPPPPPPRPPSRPKLPPGK) are compositionally biased toward pro residues. Low complexity predominate over residues 481–491 (SRPFSPPIHSS). Residue Ser485 is modified to Phosphoserine. The MHD domain occupies 558 to 826 (TLPVAAAFTE…RFAAGKYLAD (269 aa)). 4 interaction with DPF motifs-containing proteins regions span residues 560–566 (PVAAAFT), 592–594 (SFP), 666–669 (TYYN), and 812–817 (SLIKKR). Residues 648–827 (MPNLMTHLKK…FAAGKYLADN (180 aa)) form a necessary and sufficient to mediate interaction with CANX region.

In terms of assembly, interacts with proteins essential or regulating the formation of functional clathrin-coated pits. Interacts with CANX. Interacts with AP2A1. Interacts with EPS15. Interacts with SH3GL3. Interacts with AMPH. Interacts with ITSN1 (via SH3 domains). Interacts with and REPS1. Specifically expressed in brain. Also detected at lower levels in spleen and adipose tissue.

Its subcellular location is the membrane. It localises to the clathrin-coated pit. Functionally, may function in clathrin-mediated endocytosis. Has both a membrane binding/tubulating activity and the ability to recruit proteins essential to the formation of functional clathrin-coated pits. Has a preference for membranes enriched in phosphatidylserine and phosphoinositides and is required for the endocytosis of the transferrin receptor. May also bind tubulin. May play a role in the regulation of energy homeostasis. This Psammomys obesus (Fat sand rat) protein is SH3-containing GRB2-like protein 3-interacting protein 1 (SGIP1).